The sequence spans 431 residues: Serine--tRNA ligase (431 aa).

Residues 41–66 (QSRTQELQAERNARSKSIGEAARRGE) are disordered. 240–242 (TSE) serves as a coordination point for L-serine. 271-273 (RSE) is an ATP binding site. An L-serine-binding site is contributed by E294. ATP is bound at residue 358-361 (EISS). Residue S392 coordinates L-serine.

Belongs to the class-II aminoacyl-tRNA synthetase family. Type-1 seryl-tRNA synthetase subfamily. In terms of assembly, homodimer. The tRNA molecule binds across the dimer.

The protein resides in the cytoplasm. The catalysed reaction is tRNA(Ser) + L-serine + ATP = L-seryl-tRNA(Ser) + AMP + diphosphate + H(+). It carries out the reaction tRNA(Sec) + L-serine + ATP = L-seryl-tRNA(Sec) + AMP + diphosphate + H(+). It participates in aminoacyl-tRNA biosynthesis; selenocysteinyl-tRNA(Sec) biosynthesis; L-seryl-tRNA(Sec) from L-serine and tRNA(Sec): step 1/1. Its function is as follows. Catalyzes the attachment of serine to tRNA(Ser). Is also able to aminoacylate tRNA(Sec) with serine, to form the misacylated tRNA L-seryl-tRNA(Sec), which will be further converted into selenocysteinyl-tRNA(Sec). The chain is Serine--tRNA ligase from Aeromonas hydrophila subsp. hydrophila (strain ATCC 7966 / DSM 30187 / BCRC 13018 / CCUG 14551 / JCM 1027 / KCTC 2358 / NCIMB 9240 / NCTC 8049).